Here is a 285-residue protein sequence, read N- to C-terminus: Eukaryotic translation initiation factor 3 subunit F-2 (285 aa).

The MPN domain maps to 11-145; that stretch reads VVLQPLVLFQ…TRLYCGVEMG (135 aa).

Belongs to the eIF-3 subunit F family. As to quaternary structure, component of the eukaryotic translation initiation factor 3 (eIF-3) complex. The eIF-3 complex interacts with pix.

The protein localises to the cytoplasm. Its function is as follows. Component of the eukaryotic translation initiation factor 3 (eIF-3) complex, which is involved in protein synthesis of a specialized repertoire of mRNAs and, together with other initiation factors, stimulates binding of mRNA and methionyl-tRNAi to the 40S ribosome. The eIF-3 complex specifically targets and initiates translation of a subset of mRNAs involved in cell proliferation. The sequence is that of Eukaryotic translation initiation factor 3 subunit F-2 from Drosophila ananassae (Fruit fly).